Here is a 99-residue protein sequence, read N- to C-terminus: Small integral membrane protein 14 (99 aa).

The Lumenal segment spans residues 1–49 (MAEGGFDPCECICSHEHAMRRLINLLRQSQSYCTDTECLRELPGPSGDS). A helical membrane pass occupies residues 50 to 70 (GISITVILMAWMVIAVLLFLL). Residues 71–99 (RPPNLRGSSLPGKPSSPHSGQDPPAPPVD) are Cytoplasmic-facing. A disordered region spans residues 77–99 (GSSLPGKPSSPHSGQDPPAPPVD).

Its subcellular location is the endoplasmic reticulum membrane. The chain is Small integral membrane protein 14 (Smim14) from Rattus norvegicus (Rat).